Here is a 595-residue protein sequence, read N- to C-terminus: Isoprene synthase, chloroplastic (595 aa).

Residues 1-37 (MATELLCLHRPISLTHKLFRNPLPKVIQATPLTLKLR) constitute a chloroplast transit peptide. Asp345 serves as a coordination point for dimethylallyl diphosphate. Asp345 and Asp349 together coordinate Mg(2+). The DDXXD motif motif lies at 345–349 (DDIYD). 3 residues coordinate dimethylallyl diphosphate: Glu423, Arg486, and Asn489. Positions 489, 493, and 497 each coordinate Mg(2+).

Belongs to the terpene synthase family. Tpsb subfamily. Mg(2+) serves as cofactor. Mn(2+) is required as a cofactor.

It is found in the plastid. The protein localises to the chloroplast. It carries out the reaction dimethylallyl diphosphate = isoprene + diphosphate. In terms of biological role, lyase that catalyzes the formation of isoprene from dimethylallyl diphosphate. This chain is Isoprene synthase, chloroplastic (ISPS), found in Populus tremuloides (Quaking aspen).